Here is a 370-residue protein sequence, read N- to C-terminus: MSLHQFLLEPITCHAWNRDRTQIALSPNNHEVHIYKKNGGQWVKAHELKEHNGHITGIDWAPKSDRIVTCGADRNAYVWSQKDGVWKPTLVILRINRAATFVKWSPLENKFAVGSGARLISVCYFESENDWWVSKHIKKPIRSTVLSLDWHPNNVLLAAGSCDFKCRVFSAYIKEVDEKPASTPWGSKMPFGQLMSEFGGSGTGGWVHGVSFSASGSRLAWVSHDSTVSVADASKSVQVSTLKTEFLPLLSVSFVSENSVVAAGHDCCPMLFNYDDRGCLTFVSKLDIPKQSIQRNMSAMERFRNMDKRATTEDRNTALETLHQNSITQVSIYEVDKQDCRKFCTTGIDGAMTIWDFKTLESSIQGLRIM.

6 WD repeats span residues 6 to 45 (FLLE…WVKA), 50 to 89 (EHNG…WKPT), 140 to 179 (PIRS…VDEK), 202 to 241 (GTGG…QVST), 244 to 284 (TEFL…TFVS), and 322 to 365 (LHQN…SSIQ).

Belongs to the WD repeat ARPC1 family. In terms of assembly, probable component of the Arp2/3 complex in which it may replace ARPC1B.

It is found in the cytoplasm. Its subcellular location is the cytoskeleton. The protein localises to the nucleus. In terms of biological role, probably functions as a component of the Arp2/3 complex which is involved in regulation of actin polymerization and together with an activating nucleation-promoting factor (NPF) mediates the formation of branched actin networks. In addition to its role in the cytoplasmic cytoskeleton, the Arp2/3 complex also promotes actin polymerization in the nucleus, thereby regulating gene transcription and repair of damaged DNA. The polypeptide is Actin-related protein 2/3 complex subunit 1A (ARPC1A) (Bos taurus (Bovine)).